A 536-amino-acid polypeptide reads, in one-letter code: Small conductance calcium-activated potassium channel protein 1 (536 aa).

Positions 1 to 90 (MSSRSHNGSV…KPPTVSHRLG (90 aa)) are disordered. The segment covering 65 to 75 (QEEEEEEEDED) has biased composition (acidic residues). The chain crosses the membrane as a helical span at residues 107–127 (LIFGMFGIVVMVTETELSWGV). A helical transmembrane segment spans residues 136 to 156 (FALKCLISLSTVILLGLVILY). Residues 224-244 (VLLSIPMFLRLYLLARVMLLH) form a helical membrane-spanning segment. The chain crosses the membrane as a helical span at residues 273-293 (LMTICPGTVLLVFSISSWIVA). Residues 313–333 (FLGAMWLISITFLSIGYGDMV) traverse the membrane as a helical segment. The segment at residues 342-362 (VCLLTGIMGAGCTALVVAVVA) is an intramembrane region (pore-forming). A calmodulin-binding region spans residues 380-459 (DTQLTKRVKN…LADLAKAQSI (80 aa)). The helical transmembrane segment at 487 to 507 (VLGASLQALPSLIAQAICPLP) threads the bilayer. The segment at 514-536 (SHLTTAAQSPQSHWLPTTASDCG) is disordered. Residues 515 to 536 (HLTTAAQSPQSHWLPTTASDCG) are compositionally biased toward polar residues.

It belongs to the potassium channel KCNN family. KCa2.1/KCNN1 subfamily. In terms of assembly, homodimer. Heteromultimer with KCNN2 and KCNN3. The complex is composed of 4 channel subunits each of which binds to a calmodulin subunit which regulates the channel activity through calcium-binding. Interacts with calmodulin. Widely expressed including brain.

The protein localises to the membrane. Its subcellular location is the cytoplasm. It localises to the myofibril. The protein resides in the sarcomere. It is found in the z line. It carries out the reaction K(+)(in) = K(+)(out). With respect to regulation, inhibited by bee venom neurotoxin apamin. Inhibited by d-tubocurarine and tetraethylammonium (TEA). Small conductance calcium-activated potassium channel that mediates the voltage-independent transmembrane transfer of potassium across the cell membrane through a constitutive interaction with calmodulin which binds the intracellular calcium allowing its opening. The current is characterized by a voltage-independent activation, an intracellular calcium concentration increase-dependent activation and a single-channel conductance of about 3 picosiemens. Also presents an inwardly rectifying current, thus reducing its already small outward conductance of potassium ions, which is particularly the case when the membrane potential displays positive values, above + 20 mV. Activation is followed by membrane hyperpolarization. Thought to regulate neuronal excitability by contributing to the slow component of synaptic afterhyperpolarization. In Rattus norvegicus (Rat), this protein is Small conductance calcium-activated potassium channel protein 1.